Reading from the N-terminus, the 552-residue chain is Pyrophosphate--fructose 6-phosphate 1-phosphotransferase subunit beta (552 aa).

Residue glycine 90 coordinates diphosphate. Aspartate 184 is a binding site for Mg(2+). Residues 212–214, 251–252, 259–261, glutamate 320, and 425–428 each bind substrate; these read TID, KY, MGR, and YEGR. The active-site Proton acceptor is aspartate 214.

This sequence belongs to the phosphofructokinase type A (PFKA) family. PPi-dependent PFK group II subfamily. Clade 'Long' sub-subfamily. As to quaternary structure, tetramer of two alpha (regulatory) and two beta (catalytic) chains. It depends on Mg(2+) as a cofactor.

It localises to the cytoplasm. The enzyme catalyses beta-D-fructose 6-phosphate + diphosphate = beta-D-fructose 1,6-bisphosphate + phosphate + H(+). The protein operates within carbohydrate degradation; glycolysis; D-glyceraldehyde 3-phosphate and glycerone phosphate from D-glucose: step 3/4. With respect to regulation, allosterically activated by fructose 2,6-bisphosphate. Functionally, catalytic subunit of pyrophosphate--fructose 6-phosphate 1-phosphotransferase. Catalyzes the phosphorylation of D-fructose 6-phosphate, the first committing step of glycolysis. Uses inorganic phosphate (PPi) as phosphoryl donor instead of ATP like common ATP-dependent phosphofructokinases (ATP-PFKs), which renders the reaction reversible, and can thus function both in glycolysis and gluconeogenesis. The sequence is that of Pyrophosphate--fructose 6-phosphate 1-phosphotransferase subunit beta from Ricinus communis (Castor bean).